We begin with the raw amino-acid sequence, 242 residues long: Phosphoribosylaminoimidazole-succinocarboxamide synthase (242 aa).

It belongs to the SAICAR synthetase family.

It carries out the reaction 5-amino-1-(5-phospho-D-ribosyl)imidazole-4-carboxylate + L-aspartate + ATP = (2S)-2-[5-amino-1-(5-phospho-beta-D-ribosyl)imidazole-4-carboxamido]succinate + ADP + phosphate + 2 H(+). It participates in purine metabolism; IMP biosynthesis via de novo pathway; 5-amino-1-(5-phospho-D-ribosyl)imidazole-4-carboxamide from 5-amino-1-(5-phospho-D-ribosyl)imidazole-4-carboxylate: step 1/2. The polypeptide is Phosphoribosylaminoimidazole-succinocarboxamide synthase (Prochlorococcus marinus subsp. pastoris (strain CCMP1986 / NIES-2087 / MED4)).